The primary structure comprises 191 residues: Probable DNA-directed RNA polymerase subunit delta (191 aa).

Residues Leu-14–Trp-83 enclose the HTH HARE-type domain. Composition is skewed to acidic residues over residues Gly-117–Glu-136 and Glu-142–Val-191. The interval Gly-117–Val-191 is disordered.

This sequence belongs to the RpoE family. RNAP is composed of a core of 2 alpha, a beta and a beta' subunits. The core is associated with a delta subunit and one of several sigma factors.

Functionally, participates in both the initiation and recycling phases of transcription. In the presence of the delta subunit, RNAP displays an increased specificity of transcription, a decreased affinity for nucleic acids, and an increased efficiency of RNA synthesis because of enhanced recycling. The protein is Probable DNA-directed RNA polymerase subunit delta of Streptococcus agalactiae serotype Ia (strain ATCC 27591 / A909 / CDC SS700).